The sequence spans 800 residues: Endoglucanase (800 aa).

A signal peptide spans 1-30; it reads MMLRKKTKQLISSILILVLLLSLFPTALAA. Glu190 serves as the catalytic Proton donor. The active-site Nucleophile is the Glu305. The interval 761 to 800 is disordered; sequence AATTEPVEPEPVDPGEETPPVDEKEAKTEQKEAEKEEKEE. Positions 767–780 are enriched in acidic residues; it reads VEPEPVDPGEETPP. Basic and acidic residues predominate over residues 781–800; sequence VDEKEAKTEQKEAEKEEKEE.

The protein belongs to the glycosyl hydrolase 5 (cellulase A) family.

The catalysed reaction is Endohydrolysis of (1-&gt;4)-beta-D-glucosidic linkages in cellulose, lichenin and cereal beta-D-glucans.. This is Endoglucanase from Halalkalibacter akibai (strain ATCC 43226 / DSM 21942 / CIP 109018 / JCM 9157 / 1139) (Bacillus akibai).